The sequence spans 208 residues: Guanylate kinase (208 aa).

The Guanylate kinase-like domain maps to 4–182 (GQLYIISAPS…ALEELKSVFR (179 aa)). 11–18 (APSGAGKT) contributes to the ATP binding site.

Belongs to the guanylate kinase family.

It localises to the cytoplasm. It carries out the reaction GMP + ATP = GDP + ADP. In terms of biological role, essential for recycling GMP and indirectly, cGMP. The polypeptide is Guanylate kinase (Hahella chejuensis (strain KCTC 2396)).